The following is a 202-amino-acid chain: NADH-quinone oxidoreductase subunit C (202 aa).

It belongs to the complex I 30 kDa subunit family. In terms of assembly, NDH-1 is composed of 14 different subunits. Subunits NuoB, C, D, E, F, and G constitute the peripheral sector of the complex.

It is found in the cell inner membrane. It catalyses the reaction a quinone + NADH + 5 H(+)(in) = a quinol + NAD(+) + 4 H(+)(out). NDH-1 shuttles electrons from NADH, via FMN and iron-sulfur (Fe-S) centers, to quinones in the respiratory chain. The immediate electron acceptor for the enzyme in this species is believed to be ubiquinone. Couples the redox reaction to proton translocation (for every two electrons transferred, four hydrogen ions are translocated across the cytoplasmic membrane), and thus conserves the redox energy in a proton gradient. This is NADH-quinone oxidoreductase subunit C from Acidithiobacillus ferrooxidans (strain ATCC 23270 / DSM 14882 / CIP 104768 / NCIMB 8455) (Ferrobacillus ferrooxidans (strain ATCC 23270)).